We begin with the raw amino-acid sequence, 286 residues long: Release factor glutamine methyltransferase (286 aa).

Residues D148 and N194 each contribute to the S-adenosyl-L-methionine site. 194-197 (NPPY) serves as a coordination point for substrate.

Belongs to the protein N5-glutamine methyltransferase family. PrmC subfamily.

It catalyses the reaction L-glutaminyl-[peptide chain release factor] + S-adenosyl-L-methionine = N(5)-methyl-L-glutaminyl-[peptide chain release factor] + S-adenosyl-L-homocysteine + H(+). Its function is as follows. Methylates the class 1 translation termination release factors RF1/PrfA and RF2/PrfB on the glutamine residue of the universally conserved GGQ motif. The chain is Release factor glutamine methyltransferase from Leptospira interrogans serogroup Icterohaemorrhagiae serovar Lai (strain 56601).